A 2319-amino-acid chain; its full sequence is A-kinase anchor protein 6 (2319 aa).

Polar residues-rich tracts occupy residues 1 to 12 (MLTMSVTLSPLR) and 324 to 339 (GVSS…AAQP). 5 disordered regions span residues 1–24 (MLTM…TDAS), 301–369 (VDDK…NATP), 493–532 (SRLK…VPNG), 566–614 (LQLQ…PSHV), and 691–757 (TRLG…SATK). A compositionally biased stretch (low complexity) spans 340 to 351 (SSETVQQESSSS). 2 stretches are compositionally biased toward polar residues: residues 518 to 532 (GKQA…VPNG) and 566 to 591 (LQLQ…SDNI). Low complexity predominate over residues 697–711 (SPSSSSDIASSLGES). The segment covering 735-754 (KYADEKSERASSSEKNESHS) has biased composition (basic and acidic residues). Spectrin repeat units follow at residues 762–848 (QKLM…QLLE) and 1036–1150 (EKVD…LLDD). Ser-1073 is subject to Phosphoserine. Residues 1250–1272 (KLGETSNEDPGYDEEADNHGGSQ) form a disordered region. The segment covering 1255–1265 (SNEDPGYDEEA) has biased composition (acidic residues). Residues Ser-1570 and Ser-1595 each carry the phosphoserine modification. Disordered regions lie at residues 1821 to 1842 (VSDE…PSDT), 1900 to 1925 (EGIP…SHGK), and 1963 to 1983 (KCPN…TEKS). Composition is skewed to polar residues over residues 1830 to 1842 (DISS…PSDT), 1911 to 1920 (NVTSKVSENL), and 1972 to 1982 (NQSTASTPTEK). The tract at residues 2063–2076 (IIDMASTALKSKSQ) is PKA-RII subunit binding domain. Positions 2198-2215 (FSDSSLSADDADTVALSS) are enriched in low complexity. Residues 2198-2319 (FSDSSLSADD…HEKRHRNMHR (122 aa)) form a disordered region.

As to quaternary structure, interacts with RII subunit of PKA, phosphatase 2B (calcineurin) and AKAP79. Interacts with SYNPO2. As to expression, highly expressed in cardiac and skeletal muscle, followed by brain.

The protein localises to the sarcoplasmic reticulum. The protein resides in the nucleus membrane. Binds to type II regulatory subunits of protein kinase A and anchors/targets them to the nuclear membrane or sarcoplasmic reticulum. May act as an adapter for assembling multiprotein complexes. This chain is A-kinase anchor protein 6 (AKAP6), found in Homo sapiens (Human).